Reading from the N-terminus, the 20-residue chain is 2-oxo-acid reductase (20 aa).

It belongs to the AOR/FOR family. Forms various types of homooligomers. [4Fe-4S] cluster serves as cofactor. The cofactor is Mo-molybdopterin.

It is found in the cell membrane. The catalysed reaction is a (2R)-2-hydroxycarboxylate + A = a 2-oxocarboxylate + AH2. Its activity is regulated as follows. Is inhibited by cyanide. Is sensitive to oxygen. Oxidoreductase with an extremely broad substrate specificity that can reduce reversibly 2-oxocarboxylates to (2R)-hydroxycarboxylates. The sequence is that of 2-oxo-acid reductase from Proteus hauseri.